The chain runs to 84 residues: KSIFERDNRRDWLVIPDAVAAYVYETVNKMFPKVGQFLADAAQIPVIVGTRNFLIRETSKLSILAEQMMEKVKTLWNTKVLGYY.

It belongs to the apovitellenin family. In terms of assembly, monomer.

In terms of biological role, protein component of the very low density lipoprotein (VLDL) of egg-laying females. Potent lipoprotein lipase inhibitor, preventing the loss of triglycerides from VLDL on their way from the liver to the growing oocytes. The polypeptide is Apovitellenin-1 (Dromaius novaehollandiae (Emu)).